The following is a 254-amino-acid chain: Emerin (254 aa).

Position 1 is an N-acetylmethionine (Met-1). The LEM domain maps to 1 to 45; the sequence is MDNYADLSDTELTTLLRRYNIPHGPVVGSTRRLYEKKIFEYETQR. Phosphoserine occurs at positions 8 and 29. The tract at residues 46-222 is interaction with F-actin; that stretch reads RRLSPPSSSA…PGAGLGQDRQ (177 aa). Ser-49 carries the post-translational modification Phosphoserine; by PKA. Phosphoserine is present on residues Ser-54, Ser-60, Ser-87, Ser-98, Ser-141, Ser-142, and Ser-143. Tyr-161 bears the Phosphotyrosine mark. Residues 168–186 form an interaction with CTNNB1 region; that stretch reads RPVSASRSSLDLSYYPTSS. 3 positions are modified to phosphoserine: Ser-171, Ser-173, and Ser-175. A helical membrane pass occupies residues 223 to 243; it reads VPLWGQLLLFLVFVIVLFFIY.

Interacts with lamins A and C, BANF1, GMCL, BCLAF1 and YTHDC1/YT521. Interacts with TMEM43; the interaction retains emerin in the nuclear inner membrane. Interacts with SUN1 and SUN2. Interacts with ACTB, SPTAN1, F-actin, CTNNB1 and beta-tubulin. Interacts with TMEM201. Interacts with NEMP1. In terms of processing, found in four different phosphorylated forms, three of which appear to be associated with the cell cycle. As to expression, skeletal muscle, heart, colon, testis, ovary and pancreas.

It localises to the nucleus inner membrane. The protein localises to the nucleus outer membrane. Its function is as follows. Stabilizes and promotes the formation of a nuclear actin cortical network. Stimulates actin polymerization in vitro by binding and stabilizing the pointed end of growing filaments. Inhibits beta-catenin activity by preventing its accumulation in the nucleus. Acts by influencing the nuclear accumulation of beta-catenin through a CRM1-dependent export pathway. Links centrosomes to the nuclear envelope via a microtubule association. Required for proper localization of non-farnesylated prelamin-A/C. Together with NEMP1, contributes to nuclear envelope stiffness in germ cells. EMD and BAF are cooperative cofactors of HIV-1 infection. Association of EMD with the viral DNA requires the presence of BAF and viral integrase. The association of viral DNA with chromatin requires the presence of BAF and EMD. The chain is Emerin (EMD) from Homo sapiens (Human).